The primary structure comprises 158 residues: Crossover junction endodeoxyribonuclease RuvC (158 aa).

Residues Asp7, Glu66, and Asp139 contribute to the active site. Positions 7, 66, and 139 each coordinate Mg(2+).

It belongs to the RuvC family. In terms of assembly, homodimer which binds Holliday junction (HJ) DNA. The HJ becomes 2-fold symmetrical on binding to RuvC with unstacked arms; it has a different conformation from HJ DNA in complex with RuvA. In the full resolvosome a probable DNA-RuvA(4)-RuvB(12)-RuvC(2) complex forms which resolves the HJ. Mg(2+) serves as cofactor.

The protein resides in the cytoplasm. It carries out the reaction Endonucleolytic cleavage at a junction such as a reciprocal single-stranded crossover between two homologous DNA duplexes (Holliday junction).. Functionally, the RuvA-RuvB-RuvC complex processes Holliday junction (HJ) DNA during genetic recombination and DNA repair. Endonuclease that resolves HJ intermediates. Cleaves cruciform DNA by making single-stranded nicks across the HJ at symmetrical positions within the homologous arms, yielding a 5'-phosphate and a 3'-hydroxyl group; requires a central core of homology in the junction. The consensus cleavage sequence is 5'-(A/T)TT(C/G)-3'. Cleavage occurs on the 3'-side of the TT dinucleotide at the point of strand exchange. HJ branch migration catalyzed by RuvA-RuvB allows RuvC to scan DNA until it finds its consensus sequence, where it cleaves and resolves the cruciform DNA. The sequence is that of Crossover junction endodeoxyribonuclease RuvC from Campylobacter lari (strain RM2100 / D67 / ATCC BAA-1060).